Consider the following 162-residue polypeptide: Lipoprotein signal peptidase (162 aa).

The next 2 membrane-spanning stretches (helical) occupy residues 66 to 86 (PFFIAVTLVAMAAIAITFRKL) and 92 to 112 (LAAVSLSLIFSGAVGNLIDRV). Active-site residues include Asp-119 and Asp-137. Residues 132 to 152 (AFNVADSAICVGVALLALDMI) traverse the membrane as a helical segment.

It belongs to the peptidase A8 family.

The protein localises to the cell inner membrane. The enzyme catalyses Release of signal peptides from bacterial membrane prolipoproteins. Hydrolyzes -Xaa-Yaa-Zaa-|-(S,diacylglyceryl)Cys-, in which Xaa is hydrophobic (preferably Leu), and Yaa (Ala or Ser) and Zaa (Gly or Ala) have small, neutral side chains.. Its pathway is protein modification; lipoprotein biosynthesis (signal peptide cleavage). This protein specifically catalyzes the removal of signal peptides from prolipoproteins. This chain is Lipoprotein signal peptidase, found in Geobacter metallireducens (strain ATCC 53774 / DSM 7210 / GS-15).